The following is a 133-amino-acid chain: MSILKEFREFAVKGNVMDMAVGVIIGGAFGKIVSSLVSDVIMPPIGWLIGGVDFKDLAIQIAPAKEGAEAVMLKYGAFIQNIFDFLIIAIAVFSMVKAINSLKRPPEVAEAPAVAKGPTQEELLAEIRDLLKK.

The next 2 membrane-spanning stretches (helical) occupy residues 10-30 (FAVKGNVMDMAVGVIIGGAFG) and 76-96 (GAFIQNIFDFLIIAIAVFSMV).

This sequence belongs to the MscL family. Homopentamer.

The protein resides in the cell inner membrane. Channel that opens in response to stretch forces in the membrane lipid bilayer. May participate in the regulation of osmotic pressure changes within the cell. In Haemophilus ducreyi (strain 35000HP / ATCC 700724), this protein is Large-conductance mechanosensitive channel.